A 403-amino-acid polypeptide reads, in one-letter code: MQMPKTLRIRNGEKVKSTFSAQEYANRHAKLRAHLAAENIDAAVFTSYHNINYYSDFLYCSFGRPYALVVTQDDVISISANIDGGQPWRRTVGTDNIVYTDWQRDNYFVAIQQALPRARRIGIEHDHLNLQNRDKLAARYPDAELVDVAAACMRMRMIKSAEEHEMIRHGARVADIGGAAIVEALRDQVPEYEVALHATQAMVRAIAETFDNVELMDTWTWFQSGINTDGAHNPVTTRKVNKGDILSLNCFPMIAGYYTALERTLFLDHCSDDHLRMWQANVEVHEAGLKLIKPGMRCSDIAKELNEIFLKHDLLQYRTFGYGHSFGTLSHYYGREAGLELREDIDTVLEPGMVVSMEPMIMLPEGRPGAGGYREHDILIVNENGAENITKFPYGPERNIIRK.

The active site involves His-232.

It belongs to the peptidase M24 family. Creatinase subfamily. Homodimer.

It carries out the reaction creatine + H2O = sarcosine + urea. The chain is Creatinase from Flavobacterium sp. (strain U-188).